The sequence spans 67 residues: Large ribosomal subunit protein uL29 (67 aa).

It belongs to the universal ribosomal protein uL29 family.

In Sorangium cellulosum (strain So ce56) (Polyangium cellulosum (strain So ce56)), this protein is Large ribosomal subunit protein uL29.